The sequence spans 225 residues: UPF0128 protein PH1314 (225 aa).

The protein belongs to the UPF0128 family.

In Pyrococcus horikoshii (strain ATCC 700860 / DSM 12428 / JCM 9974 / NBRC 100139 / OT-3), this protein is UPF0128 protein PH1314.